A 1088-amino-acid chain; its full sequence is DNA-directed RNA polymerase subunit beta (1088 aa).

Belongs to the RNA polymerase beta chain family. In terms of assembly, in plastids the minimal PEP RNA polymerase catalytic core is composed of four subunits: alpha, beta, beta', and beta''. When a (nuclear-encoded) sigma factor is associated with the core the holoenzyme is formed, which can initiate transcription.

Its subcellular location is the plastid. The protein resides in the chloroplast. It catalyses the reaction RNA(n) + a ribonucleoside 5'-triphosphate = RNA(n+1) + diphosphate. DNA-dependent RNA polymerase catalyzes the transcription of DNA into RNA using the four ribonucleoside triphosphates as substrates. This Ostreococcus tauri protein is DNA-directed RNA polymerase subunit beta.